The primary structure comprises 132 residues: C-X-C motif chemokine 5 (132 aa).

A signal peptide spans 1-40 (MSLQLRSSARIPSGSISPFMRMAPLAFLLLFTLPQHLAEA). Intrachain disulfides connect Cys53/Cys79 and Cys55/Cys95.

It belongs to the intercrine alpha (chemokine CxC) family. In terms of assembly, monomer. Homodimer. Post-translationally, GCP-2(1-78) and GCP-2(9-78) are produced by proteolytic cleavage after secretion from fibroblasts and epithelial cells. GCP-2(9-78) is the most prominent form. A number of additional N-terminal (processed between pos. 41 and 48) and C-terminal (processed between pos. 118 and 132) processed forms have been identified, probably also representing intermediate states.

Its subcellular location is the secreted. May participate in the recruitment of inflammatory cells by injured or infected tissue. GCP-2(1-78) and, more potent, GCP-2(9-78) attract neutrophils and are involved in neutrophil activation. This chain is C-X-C motif chemokine 5 (Cxcl5), found in Mus musculus (Mouse).